A 496-amino-acid polypeptide reads, in one-letter code: MIEIDGRSLRVEDVYAVAVEYDRVSISDDTLKAVEEKHEAFLKLINSGKTVYGVNTGFGSLLNVHIERDQEIELQKNLIRSHSSGVGDYLENRYVRAIMAVRLNSLAAGYSAVSADLLNMMVEMLNRDVIPAVPKYGSVGASGDLAPLAHIGLAMMGEGKAFFEGRLMDSARALEKAGLKPYQFKEKEGVALINGTSFMSGILSIAVMDAHDILENAIRSALLSFEALGGTSKAFTPWILGARPHLGQVAIGNRFREYLTGSDIVKRADSVKVQDAYTLRCIPQVYGSVADVIDYVENVLSVEINSATDNPLFNGEEVVSGGNFHGEPVALAADFLAIALTDLGNMVERRIARLVDTNLSGLPPFLTPDSGLNSGYMIPQYTAAALCNRNKVLAYPSSADTIPTSANQEDHVSMGATGSLKLLEIIDNVRYIIAIEYLLGSQALEFTDKGMSPSTRKIYEKIREKVEKLDHDRPPSFDIETIRKMMDKKEFISALP.

Residues 141 to 143 (ASG) constitute a cross-link (5-imidazolinone (Ala-Gly)). 2,3-didehydroalanine (Ser) is present on Ser142.

It belongs to the PAL/histidase family. Contains an active site 4-methylidene-imidazol-5-one (MIO), which is formed autocatalytically by cyclization and dehydration of residues Ala-Ser-Gly.

The protein resides in the cytoplasm. It carries out the reaction L-histidine = trans-urocanate + NH4(+). The protein operates within amino-acid degradation; L-histidine degradation into L-glutamate; N-formimidoyl-L-glutamate from L-histidine: step 1/3. The chain is Probable histidine ammonia-lyase from Thermoplasma acidophilum (strain ATCC 25905 / DSM 1728 / JCM 9062 / NBRC 15155 / AMRC-C165).